The chain runs to 401 residues: Argininosuccinate synthase (401 aa).

ATP contacts are provided by residues 11-19 (AYSGGLDTS) and Ala-38. Residues Tyr-89 and Ser-94 each coordinate L-citrulline. An ATP-binding site is contributed by Gly-119. L-aspartate is bound by residues Thr-121, Asn-125, and Asp-126. Asn-125 provides a ligand contact to L-citrulline. Arg-129, Ser-180, Ser-189, Glu-265, and Tyr-277 together coordinate L-citrulline.

This sequence belongs to the argininosuccinate synthase family. Type 1 subfamily. Homotetramer.

It is found in the cytoplasm. It carries out the reaction L-citrulline + L-aspartate + ATP = 2-(N(omega)-L-arginino)succinate + AMP + diphosphate + H(+). It functions in the pathway amino-acid biosynthesis; L-arginine biosynthesis; L-arginine from L-ornithine and carbamoyl phosphate: step 2/3. The sequence is that of Argininosuccinate synthase from Syntrophus aciditrophicus (strain SB).